A 261-amino-acid chain; its full sequence is Cytochrome c oxidase subunit 3 (261 aa).

The Mitochondrial matrix segment spans residues 1–15 (MTHQTHACHMVNPSP). Residues 16–34 (WPLTGALSGLLMTSGLIMW) traverse the membrane as a helical segment. Residues 35-40 (FHFNST) are Mitochondrial intermembrane-facing. The helical transmembrane segment at 41–66 (TLLMLGLTTNMLTMYQWWRDVIREST) threads the bilayer. Residues 67 to 72 (FQGHHT) lie on the Mitochondrial matrix side of the membrane. A helical transmembrane segment spans residues 73-105 (PNVQKGLRYGMILFIISEVLFFTGFFWAFYHSS). Residues 106–128 (LAPTPELGGCWPPTGIHPLNPLE) lie on the Mitochondrial intermembrane side of the membrane. The chain crosses the membrane as a helical span at residues 129–152 (VPLLNTSVLLASGVSITWAHHSLM). Over 153-155 (EGN) the chain is Mitochondrial matrix. The helical transmembrane segment at 156 to 183 (RNHMLQALFITIALGVYFTLLQASEYYE) threads the bilayer. Residues 184 to 190 (APFTISD) are Mitochondrial intermembrane-facing. Residues 191-223 (GVYGSTFFVATGFHGLHVIIGSTFLIVCFFRQL) form a helical membrane-spanning segment. The Mitochondrial matrix segment spans residues 224 to 232 (KFHFTSSHH). Residues 233–256 (FGFEAAAWYWHFVDVVWLFLYVSI) traverse the membrane as a helical segment. Over 257–261 (YWWGS) the chain is Mitochondrial intermembrane.

Belongs to the cytochrome c oxidase subunit 3 family. In terms of assembly, component of the cytochrome c oxidase (complex IV, CIV), a multisubunit enzyme composed of 14 subunits. The complex is composed of a catalytic core of 3 subunits MT-CO1, MT-CO2 and MT-CO3, encoded in the mitochondrial DNA, and 11 supernumerary subunits COX4I, COX5A, COX5B, COX6A, COX6B, COX6C, COX7A, COX7B, COX7C, COX8 and NDUFA4, which are encoded in the nuclear genome. The complex exists as a monomer or a dimer and forms supercomplexes (SCs) in the inner mitochondrial membrane with NADH-ubiquinone oxidoreductase (complex I, CI) and ubiquinol-cytochrome c oxidoreductase (cytochrome b-c1 complex, complex III, CIII), resulting in different assemblies (supercomplex SCI(1)III(2)IV(1) and megacomplex MCI(2)III(2)IV(2)).

The protein localises to the mitochondrion inner membrane. It catalyses the reaction 4 Fe(II)-[cytochrome c] + O2 + 8 H(+)(in) = 4 Fe(III)-[cytochrome c] + 2 H2O + 4 H(+)(out). Component of the cytochrome c oxidase, the last enzyme in the mitochondrial electron transport chain which drives oxidative phosphorylation. The respiratory chain contains 3 multisubunit complexes succinate dehydrogenase (complex II, CII), ubiquinol-cytochrome c oxidoreductase (cytochrome b-c1 complex, complex III, CIII) and cytochrome c oxidase (complex IV, CIV), that cooperate to transfer electrons derived from NADH and succinate to molecular oxygen, creating an electrochemical gradient over the inner membrane that drives transmembrane transport and the ATP synthase. Cytochrome c oxidase is the component of the respiratory chain that catalyzes the reduction of oxygen to water. Electrons originating from reduced cytochrome c in the intermembrane space (IMS) are transferred via the dinuclear copper A center (CU(A)) of subunit 2 and heme A of subunit 1 to the active site in subunit 1, a binuclear center (BNC) formed by heme A3 and copper B (CU(B)). The BNC reduces molecular oxygen to 2 water molecules using 4 electrons from cytochrome c in the IMS and 4 protons from the mitochondrial matrix. The sequence is that of Cytochrome c oxidase subunit 3 (MT-CO3) from Gazella saudiya (Saudi gazelle).